We begin with the raw amino-acid sequence, 259 residues long: tRNA pseudouridine synthase A (259 aa).

Catalysis depends on Asp-51, which acts as the Nucleophile. Residue Tyr-109 coordinates substrate.

Belongs to the tRNA pseudouridine synthase TruA family. As to quaternary structure, homodimer.

The catalysed reaction is uridine(38/39/40) in tRNA = pseudouridine(38/39/40) in tRNA. Its function is as follows. Formation of pseudouridine at positions 38, 39 and 40 in the anticodon stem and loop of transfer RNAs. This chain is tRNA pseudouridine synthase A, found in Colwellia psychrerythraea (strain 34H / ATCC BAA-681) (Vibrio psychroerythus).